A 461-amino-acid polypeptide reads, in one-letter code: L-seryl-tRNA(Sec) selenium transferase (461 aa).

Position 294 is an N6-(pyridoxal phosphate)lysine (lysine 294).

Belongs to the SelA family. The cofactor is pyridoxal 5'-phosphate.

The protein resides in the cytoplasm. It carries out the reaction L-seryl-tRNA(Sec) + selenophosphate + H(+) = L-selenocysteinyl-tRNA(Sec) + phosphate. The protein operates within aminoacyl-tRNA biosynthesis; selenocysteinyl-tRNA(Sec) biosynthesis; selenocysteinyl-tRNA(Sec) from L-seryl-tRNA(Sec) (bacterial route): step 1/1. Functionally, converts seryl-tRNA(Sec) to selenocysteinyl-tRNA(Sec) required for selenoprotein biosynthesis. The polypeptide is L-seryl-tRNA(Sec) selenium transferase (Haemophilus influenzae (strain ATCC 51907 / DSM 11121 / KW20 / Rd)).